Here is an 82-residue protein sequence, read N- to C-terminus: RNA-binding protein Hfq (82 aa).

In terms of domain architecture, Sm spans 10-70; the sequence is DTFLNHVRKN…ISTIMPAQPV (61 aa).

The protein belongs to the Hfq family. In terms of assembly, homohexamer.

Functionally, RNA chaperone that binds small regulatory RNA (sRNAs) and mRNAs to facilitate mRNA translational regulation in response to envelope stress, environmental stress and changes in metabolite concentrations. Also binds with high specificity to tRNAs. This Parvibaculum lavamentivorans (strain DS-1 / DSM 13023 / NCIMB 13966) protein is RNA-binding protein Hfq.